We begin with the raw amino-acid sequence, 350 residues long: MIEADRIVTASSRDRDEQLDRAIRPLKLAEYIGQPVVREQMDLFIRAAKGRQEALDHTLIFGPPGLGKTTLANIIAEEMGVSIKSTSGPVLERPGDLAALLTNLEAGDVLFVDEIHRLSPIVEEVLYPAMEDFQLDIMIGEGPAARSIKLDLPPFTLVGATTRAGMLTNPLRDRFGIVQRLEFYSTEDLATIVRRSAGILGLPTEPEGAFEIARRARGTPRIANRLLRRVRDFAQVRGKGEITRQIADLALNMLDVDERGFDHQDRRLLLTLIEKFDGGPVGIDSLAAAISEERHTIEDVLEPYLIQQGYIMRTPRGRVVTRHAYLHFGLNLPKRMNEPPTPDLFEGDIV.

The tract at residues 4-184 (ADRIVTASSR…FGIVQRLEFY (181 aa)) is large ATPase domain (RuvB-L). ATP-binding positions include isoleucine 23, arginine 24, glycine 65, lysine 68, threonine 69, threonine 70, 131–133 (EDF), arginine 174, tyrosine 184, and arginine 221. A Mg(2+)-binding site is contributed by threonine 69. Residues 185–255 (STEDLATIVR…IADLALNMLD (71 aa)) form a small ATPAse domain (RuvB-S) region. Residues 258-350 (ERGFDHQDRR…TPDLFEGDIV (93 aa)) are head domain (RuvB-H). Positions 294, 313, and 318 each coordinate DNA.

The protein belongs to the RuvB family. In terms of assembly, homohexamer. Forms an RuvA(8)-RuvB(12)-Holliday junction (HJ) complex. HJ DNA is sandwiched between 2 RuvA tetramers; dsDNA enters through RuvA and exits via RuvB. An RuvB hexamer assembles on each DNA strand where it exits the tetramer. Each RuvB hexamer is contacted by two RuvA subunits (via domain III) on 2 adjacent RuvB subunits; this complex drives branch migration. In the full resolvosome a probable DNA-RuvA(4)-RuvB(12)-RuvC(2) complex forms which resolves the HJ.

Its subcellular location is the cytoplasm. The catalysed reaction is ATP + H2O = ADP + phosphate + H(+). In terms of biological role, the RuvA-RuvB-RuvC complex processes Holliday junction (HJ) DNA during genetic recombination and DNA repair, while the RuvA-RuvB complex plays an important role in the rescue of blocked DNA replication forks via replication fork reversal (RFR). RuvA specifically binds to HJ cruciform DNA, conferring on it an open structure. The RuvB hexamer acts as an ATP-dependent pump, pulling dsDNA into and through the RuvAB complex. RuvB forms 2 homohexamers on either side of HJ DNA bound by 1 or 2 RuvA tetramers; 4 subunits per hexamer contact DNA at a time. Coordinated motions by a converter formed by DNA-disengaged RuvB subunits stimulates ATP hydrolysis and nucleotide exchange. Immobilization of the converter enables RuvB to convert the ATP-contained energy into a lever motion, pulling 2 nucleotides of DNA out of the RuvA tetramer per ATP hydrolyzed, thus driving DNA branch migration. The RuvB motors rotate together with the DNA substrate, which together with the progressing nucleotide cycle form the mechanistic basis for DNA recombination by continuous HJ branch migration. Branch migration allows RuvC to scan DNA until it finds its consensus sequence, where it cleaves and resolves cruciform DNA. The polypeptide is Holliday junction branch migration complex subunit RuvB (Stutzerimonas stutzeri (strain A1501) (Pseudomonas stutzeri)).